We begin with the raw amino-acid sequence, 220 residues long: Charged multivesicular body protein 3 (220 aa).

The N-myristoyl glycine moiety is linked to residue Gly-2. Positions 22–54 (KIRKEMRVIDRQIRDIQREQEKVKRSIKESAKK) form a coiled coil. The important for autoinhibitory function stretch occupies residues 168–169 (IL). Residues 196–220 (AMAASDEEEEEDLEAMQSRLAALRS) are disordered. The stretch at 197–220 (MAASDEEEEEDLEAMQSRLAALRS) forms a coiled coil. The segment covering 200-209 (SDEEEEEDLE) has biased composition (acidic residues). An MIT-interacting motif motif is present at residues 201–209 (DEEEEEDLE). Interaction with STAMBP regions lie at residues 203–207 (EEEED) and 219–220 (RS).

The protein belongs to the SNF7 family. Probable core component of the endosomal sorting required for transport complex III (ESCRT-III). ESCRT-III components are thought to multimerize to form a flat lattice on the perimeter membrane of the endosome. Several assembly forms of ESCRT-III may exist that interact and act sequentially.

It is found in the cytoplasm. Its subcellular location is the cytosol. The protein resides in the membrane. It localises to the endosome. The protein localises to the late endosome membrane. Its function is as follows. Probable core component of the endosomal sorting required for transport complex III (ESCRT-III) which is involved in multivesicular bodies (MVBs) formation and sorting of endosomal cargo proteins into MVBs. MVBs contain intraluminal vesicles (ILVs) that are generated by invagination and scission from the limiting membrane of the endosome and mostly are delivered to lysosomes enabling degradation of membrane proteins, such as stimulated growth factor receptors, lysosomal enzymes and lipids. Involved in late stages of cytokinesis. Plays a role in endosomal sorting/trafficking of EGF receptor. The sequence is that of Charged multivesicular body protein 3 (chmp3) from Xenopus tropicalis (Western clawed frog).